Reading from the N-terminus, the 554-residue chain is Inactive sesquithujene synthase (554 aa).

Mg(2+) contacts are provided by Asp308 and Asp312. Substrate-binding residues include Asp308, Asp312, Arg449, and Asn452. Residues 308–312 carry the DDXXD motif motif; that stretch reads DDMFD. Positions 452, 456, and 460 each coordinate Mg(2+).

It belongs to the terpene synthase family. In terms of assembly, monomer. It depends on Mg(2+) as a cofactor. Mn(2+) serves as cofactor.

Its subcellular location is the cytoplasm. It participates in secondary metabolite biosynthesis; terpenoid biosynthesis. Its function is as follows. Non-functional sesquiterpene synthase having less than 1% of the activity found in cv. Delprim. This is Inactive sesquithujene synthase from Zea mays (Maize).